Consider the following 254-residue polypeptide: Phosphoribosylaminoimidazole-succinocarboxamide synthase 1 (254 aa).

It belongs to the SAICAR synthetase family.

It catalyses the reaction 5-amino-1-(5-phospho-D-ribosyl)imidazole-4-carboxylate + L-aspartate + ATP = (2S)-2-[5-amino-1-(5-phospho-beta-D-ribosyl)imidazole-4-carboxamido]succinate + ADP + phosphate + 2 H(+). Its pathway is purine metabolism; IMP biosynthesis via de novo pathway; 5-amino-1-(5-phospho-D-ribosyl)imidazole-4-carboxamide from 5-amino-1-(5-phospho-D-ribosyl)imidazole-4-carboxylate: step 1/2. The chain is Phosphoribosylaminoimidazole-succinocarboxamide synthase 1 (purC1) from Agrobacterium fabrum (strain C58 / ATCC 33970) (Agrobacterium tumefaciens (strain C58)).